The following is an 807-amino-acid chain: ATP-binding cassette sub-family F member 1 (807 aa).

The disordered stretch occupies residues 1–227 (MPKGPKQQPP…KEKAKKAEQM (227 aa)). The residue at position 22 (Ser-22) is a Phosphoserine. Residues 29-39 (KKGKKDKKTKK) are compositionally biased toward basic residues. The span at 47-65 (VEDRQAGEEEKVLKEKEQQ) shows a compositional bias: basic and acidic residues. Positions 73–85 (QKKKRDTRKGRRK) are enriched in basic residues. At Ser-106 the chain carries Phosphoserine. Residues Ser-110 and Ser-141 each carry the phosphoserine; by CK2 modification. Basic and acidic residues predominate over residues 148–161 (EKHPPKPAKPEKNR). Residue Ser-167 is modified to Phosphoserine. Positions 197 to 207 (LDDEEEQDEEE) are enriched in acidic residues. Positions 208–227 (IKEKEPPKQGKEKAKKAEQM) are enriched in basic and acidic residues. An ABC transporter 1 domain is found at 266–510 (IKLEKFSISA…MYQQKQKELL (245 aa)). ATP is bound at residue 298–305 (GPNGKGKT). Positions 521–542 (KELKAGGKSTKQAEKQTKEALT) are enriched in basic and acidic residues. The segment at 521–564 (KELKAGGKSTKQAEKQTKEALTRKQQKCRRKNQDEESQEAPELL) is disordered. At Ser-557 the chain carries Phosphoserine. Residues 587–802 (LGLHGVTFGY…VLEALGEVMV (216 aa)) form the ABC transporter 2 domain. 620–627 (GPNGVGKS) is an ATP binding site.

It belongs to the ABC transporter superfamily. ABCF family. EF3 subfamily. In terms of assembly, interacts (via N-terminus) with EIF2S1; the interaction is independent of its phosphorylated status. Associates (via both ABC transporter domains) with the ribosomes. Phosphorylated at phosphoserine and phosphothreonine. Phosphorylation on Ser-110 and Ser-141 by CK2; inhibits association of EIF2 with ribosomes.

Its subcellular location is the cytoplasm. The protein localises to the nucleus. It is found in the nucleoplasm. The protein resides in the nucleus envelope. Its function is as follows. Required for efficient Cap- and IRES-mediated mRNA translation initiation. Not involved in the ribosome biogenesis. This is ATP-binding cassette sub-family F member 1 (ABCF1) from Sus scrofa (Pig).